The sequence spans 264 residues: Hydroxyethylthiazole kinase (264 aa).

Residue Met-41 coordinates substrate. ATP is bound by residues Lys-117 and Ser-163. Residue Gly-190 coordinates substrate.

It belongs to the Thz kinase family. Mg(2+) serves as cofactor.

It carries out the reaction 5-(2-hydroxyethyl)-4-methylthiazole + ATP = 4-methyl-5-(2-phosphooxyethyl)-thiazole + ADP + H(+). It functions in the pathway cofactor biosynthesis; thiamine diphosphate biosynthesis; 4-methyl-5-(2-phosphoethyl)-thiazole from 5-(2-hydroxyethyl)-4-methylthiazole: step 1/1. Its function is as follows. Catalyzes the phosphorylation of the hydroxyl group of 4-methyl-5-beta-hydroxyethylthiazole (THZ). In Thermoanaerobacter pseudethanolicus (strain ATCC 33223 / 39E) (Clostridium thermohydrosulfuricum), this protein is Hydroxyethylthiazole kinase.